Reading from the N-terminus, the 214-residue chain is Nucleoside triphosphate pyrophosphatase (214 aa).

Asp-79 (proton acceptor) is an active-site residue.

This sequence belongs to the Maf family. A divalent metal cation is required as a cofactor.

Its subcellular location is the cytoplasm. It catalyses the reaction a ribonucleoside 5'-triphosphate + H2O = a ribonucleoside 5'-phosphate + diphosphate + H(+). It carries out the reaction a 2'-deoxyribonucleoside 5'-triphosphate + H2O = a 2'-deoxyribonucleoside 5'-phosphate + diphosphate + H(+). Nucleoside triphosphate pyrophosphatase. May have a dual role in cell division arrest and in preventing the incorporation of modified nucleotides into cellular nucleic acids. The sequence is that of Nucleoside triphosphate pyrophosphatase from Rhodococcus opacus (strain B4).